Reading from the N-terminus, the 152-residue chain is Ninjurin-1 (152 aa).

Residue Met1 is modified to N-acetylmethionine. Over residues Met1 to Leu10 the composition is skewed to acidic residues. Positions Met1–Gly30 are disordered. The Extracellular portion of the chain corresponds to Met1–Val78. Low complexity predominate over residues Pro16–Pro27. Phosphoserine is present on residues Ser18, Ser21, and Ser25. Positions Pro26–Asn37 are N-terminal adhesion motif. A required to induce plasma membrane rupture region spans residues His40–Glu69. Positions Lys44–Ala55 are helix alpha1. Positions Met58 to Phe74 are helix alpha2. N-linked (GlcNAc...) asparagine glycosylation occurs at Asn60. A helical transmembrane segment spans residues Pro79–Lys103. The Cytoplasmic portion of the chain corresponds to Tyr104–Ala113. Residues Lys114 to Ala138 form a helical membrane-spanning segment. The Extracellular portion of the chain corresponds to Phe139 to Gln152.

The protein belongs to the ninjurin family. Homodimer; in absence of death stimuli, forms an inactive homodimer. Homooligomer; in response to death stimuli, homooligomerizes into long, highly branched filaments and large, ring-shaped structures in the membrane. The topology shown in the entry corresponds to the activated form. In terms of processing, cleaved by MMP9 protease to generate the Secreted ninjurin-1 form. N-linked glycosylation is required for homooligomerization.

Its subcellular location is the cell membrane. It is found in the synaptic cell membrane. The protein resides in the secreted. Its activity is regulated as follows. In response to death stimuli, homooligomerizes and disrupts membrane integrity by introducing the hydrophilic faces of alpha1 and alpha2 helices into the hydrophobic membrane. Homooligomerization and ability to mediate plasma membrane rupture is inhibited by glycine; it is unclear whether glycine directly or indirectly inhibits homooligomerization. In normal conditions, NINJ1 is autoinhibited via formation of a homodimer: in the inactive homodimer, the alpha1 and alpha2 helices (residues 44-74) form a single transmembrane region without a kink, in which hydrophilic faces of alpha1 and alpha2 helices are sequestered. Functionally, effector of various programmed cell death, such as pyroptosis and necroptosis, which mediates plasma membrane rupture (cytolysis). Oligomerizes in response to death stimuli and forms ring-like structures on the plasma membrane: acts by cutting and shedding membrane disks, like a cookie cutter, leading to membrane damage and loss that cannot be repaired by the cell. Plasma membrane rupture leads to release intracellular molecules named damage-associated molecular patterns (DAMPs) that propagate the inflammatory response. Mechanistically, mediates plasma membrane rupture by introducing hydrophilic faces of 2 alpha helices into the hydrophobic membrane. Induces plasma membrane rupture downstream of Gasdermin (GSDMA, GSDMB, GSDMC, GSDMD, or GSDME) or MLKL during pyroptosis or necroptosis, respectively. Acts as an effector of PANoptosis downstream of CASP1, CASP4, CASP8 and RIPK3. Also induces plasma membrane rupture in response to cell swelling caused by osmotic stress and ferroptosis downstream of lipid peroxidation. Acts as a regulator of Toll-like receptor 4 (TLR4) signaling triggered by lipopolysaccharide (LPS) during systemic inflammation; directly binds LPS. Involved in leukocyte migration during inflammation by promoting transendothelial migration of macrophages via homotypic binding. Promotes the migration of monocytes across the brain endothelium to central nervous system inflammatory lesions. Also acts as a homophilic transmembrane adhesion molecule involved in various processes such as axonal growth, cell chemotaxis and angiogenesis. Promotes cell adhesion by mediating homophilic interactions via its extracellular N-terminal adhesion motif (N-NAM). Involved in the progression of the inflammatory stress by promoting cell-to-cell interactions between immune cells and endothelial cells. Plays a role in nerve regeneration by promoting maturation of Schwann cells. Acts as a regulator of angiogenesis. Promotes the formation of new vessels by mediating the interaction between capillary pericyte cells and endothelial cells. Promotes osteoclasts development by enhancing the survival of prefusion osteoclasts. Also involved in striated muscle growth and differentiation. Its function is as follows. Secreted form generated by cleavage, which has chemotactic activity. Acts as an anti-inflammatory mediator by promoting monocyte recruitment, thereby ameliorating atherosclerosis. The chain is Ninjurin-1 from Rattus norvegicus (Rat).